A 511-amino-acid chain; its full sequence is Peptide transporter YePEPT (511 aa).

Residues 1–19 (MQTSTNTPGGRTFFGHPYP) are Cytoplasmic-facing. Residues 20–45 (LSGLFLSEMWERFSFYGIRPLLILFM) form a helical membrane-spanning segment. Over 46–59 (AATVFDGGMGLPRE) the chain is Periplasmic. Residues 60–84 (QASAIVGIFAGSMYLAALPGGLLAD) form a helical membrane-spanning segment. Residues 85 to 88 (NWLG) are Cytoplasmic-facing. Residues 89–109 (QQRAVWYGSILIALGHLSIAL) traverse the membrane as a helical segment. At 110-115 (SAFFGN) the chain is on the periplasmic side. Residues 116-138 (DLFFIGLVFIVLGTGLFKTCISV) traverse the membrane as a helical segment. Over 139 to 149 (MVGTLYKPGDA) the chain is Cytoplasmic. A helical transmembrane segment spans residues 150 to 175 (RRDGGFSLFYMGINMGSFIAPLLSGW). Over 176–181 (LLRTHG) the chain is Periplasmic. A helical membrane pass occupies residues 182 to 208 (WHWGFGIGGIGMLVALLIFRGFAIPAM). Residues 209 to 232 (KRYDAEVGLDSSWNKPTNQRQGVG) lie on the Cytoplasmic side of the membrane. Residues 233–253 (RWVTAIMAVVVVIIALISQGV) form a helical membrane-spanning segment. Residues 254-256 (IPI) lie on the Periplasmic side of the membrane. The chain crosses the membrane as a helical span at residues 257–279 (NPVMIASLLVYVIAASVTLYFIY). Over 280–294 (LFAFAKMSRKDRARL) the chain is Cytoplasmic. The helical transmembrane segment at 295-321 (LVCFILLVSAAFFWSAFEQKPTSFNLF) threads the bilayer. The Periplasmic portion of the chain corresponds to 322 to 335 (ANDYTDRMVMGFEI). Residues 336–357 (PTVWFQSINALFIILLAPVFSW) form a helical membrane-spanning segment. The Cytoplasmic portion of the chain corresponds to 358–369 (AWPALAKKKIQP). Residues 370–396 (SSITKFVIGILCAAAGFAVMMYAAQHV) form a helical membrane-spanning segment. The Periplasmic segment spans residues 397 to 405 (LSSGGAGVS). A helical transmembrane segment spans residues 406–426 (PLWLVMSILLLTLGELCLSPI). Over 427 to 441 (GLATMTLLAPDRMRG) the chain is Cytoplasmic. A helical transmembrane segment spans residues 442–462 (QVMGLWFCASSLGNLAAGLIG). Topologically, residues 463-471 (GHVKADQLD) are periplasmic. Residues 472 to 496 (MLPTLFARCSIALVICAAVLILLIV) traverse the membrane as a helical segment. Residues 497–511 (PIRRLMNNTQGQQTA) lie on the Cytoplasmic side of the membrane.

The protein belongs to the major facilitator superfamily. Proton-dependent oligopeptide transporter (POT/PTR) (TC 2.A.17) family.

The protein localises to the cell inner membrane. With respect to regulation, transport is inhibited by the proton ionophore carbonyl cyanide m-chlorophenylhydrazone (CCCP). Its function is as follows. Mediates the proton-dependent uptake of dipeptides. Shows higher affinity for dipeptides with a negatively charged amino acid residue at the N-terminal position, such as Asp-Ala and Glu-Ala. Also displays specificity for Ala-Ala, Ala-Tyr and Tyr-Ala. The chain is Peptide transporter YePEPT from Yersinia enterocolitica subsp. palearctica serotype O:3 (strain YE-P4).